The primary structure comprises 257 residues: OCIA domain-containing protein 1 (257 aa).

Disordered regions lie at residues 1–20 (MDSPLNDGSHHPPPHAPHPL) and 148–257 (YSDE…SWTD). In terms of domain architecture, OCIA spans 1-110 (MDSPLNDGSH…MRLPNSHLGE (110 aa)). The span at 156–170 (GRSTSLNLDTESRPT) shows a compositional bias: polar residues. The span at 204–216 (EDLRRRNREEYSK) shows a compositional bias: basic and acidic residues.

The protein belongs to the OCIAD1 family. As to quaternary structure, interacts with STAT3 and ARF1. As to expression, expressed in all cells of the primary lymph gland lobe.

It localises to the endosome. Functionally, maintains stem cell potency. Involved in endocytic pathways that mediate signaling during hematopoiesis. This Drosophila melanogaster (Fruit fly) protein is OCIA domain-containing protein 1 (asrij).